A 478-amino-acid polypeptide reads, in one-letter code: NADH-quinone oxidoreductase subunit N (478 aa).

Helical transmembrane passes span Leu5–Ala25, Met37–Leu57, Phe68–Leu88, Phe99–Ser119, Phe121–Phe141, Phe156–Phe176, Leu199–Phe219, Pro231–Leu251, Val268–Thr288, Leu293–Ser313, Leu320–Ala340, Ala365–Phe385, Leu401–Leu421, and Val446–Leu466.

This sequence belongs to the complex I subunit 2 family. In terms of assembly, NDH-1 is composed of 14 different subunits. Subunits NuoA, H, J, K, L, M, N constitute the membrane sector of the complex.

It localises to the cell inner membrane. It carries out the reaction a quinone + NADH + 5 H(+)(in) = a quinol + NAD(+) + 4 H(+)(out). Functionally, NDH-1 shuttles electrons from NADH, via FMN and iron-sulfur (Fe-S) centers, to quinones in the respiratory chain. The immediate electron acceptor for the enzyme in this species is believed to be ubiquinone. Couples the redox reaction to proton translocation (for every two electrons transferred, four hydrogen ions are translocated across the cytoplasmic membrane), and thus conserves the redox energy in a proton gradient. This Granulibacter bethesdensis (strain ATCC BAA-1260 / CGDNIH1) protein is NADH-quinone oxidoreductase subunit N.